Consider the following 631-residue polypeptide: Pescadillo homolog (631 aa).

Residues 321 to 414 enclose the BRCT domain; that stretch reads RLRTLFKGLK…QLLPTNDYFL (94 aa). The span at 428–442 shows a compositional bias: basic and acidic residues; that stretch reads SKRDSYIPPEEKALH. Disordered regions lie at residues 428–471, 489–561, and 602–631; these read SKRD…EADQ, YKKY…VDEH, and ADNKEAKKAAKREARKQAAEAAARAAKLVK. Phosphoserine occurs at positions 453 and 457. Composition is skewed to acidic residues over residues 453–471 and 498–525; these read SEEESEEDEAEKEEEEADQ and VNEDEEDLSEEDDEEDDDEEDVDKEDVD. Positions 526–538 are enriched in basic and acidic residues; sequence EQTKRKQQEKEKM. Positions 544–553 are enriched in basic residues; the sequence is KVHKVNKRQV. Positions 591-631 form a coiled coil; it reads WLLRKKRRNIDADNKEAKKAAKREARKQAAEAAARAAKLVK. The span at 602–619 shows a compositional bias: basic and acidic residues; it reads ADNKEAKKAAKREARKQA. Low complexity predominate over residues 620-631; sequence AEAAARAAKLVK.

The protein belongs to the pescadillo family.

Its subcellular location is the nucleus. The protein resides in the nucleolus. The protein localises to the nucleoplasm. Functionally, required for maturation of ribosomal RNAs and formation of the large ribosomal subunit. The protein is Pescadillo homolog of Drosophila pseudoobscura pseudoobscura (Fruit fly).